The sequence spans 436 residues: Tol-Pal system protein TolB (436 aa).

The N-terminal stretch at 1–28 is a signal peptide; that stretch reads MEMLRRNFFRLLMVLVAGCGLIASPAKA.

It belongs to the TolB family. The Tol-Pal system is composed of five core proteins: the inner membrane proteins TolA, TolQ and TolR, the periplasmic protein TolB and the outer membrane protein Pal. They form a network linking the inner and outer membranes and the peptidoglycan layer.

It localises to the periplasm. In terms of biological role, part of the Tol-Pal system, which plays a role in outer membrane invagination during cell division and is important for maintaining outer membrane integrity. The polypeptide is Tol-Pal system protein TolB (Sinorhizobium medicae (strain WSM419) (Ensifer medicae)).